Reading from the N-terminus, the 198-residue chain is MKQPIHTDPAKPDDFSTEDWRRLLTHLGENADRQGLRETPQRVEKAWKHWTSGYDQDPAEILKVFEDGAEQYNELIVVRGIPVYSHCEHHLAPFFGTATIGYTPNGKIVGLSKLTRLVDCFAKRLQVQERLTIQIADTLMEHVQPLSVGVVIRCRHMCMESRGIRTPGEETVTSALLGEMRTNLGLRNEFLMLAREKD.

Residues cysteine 87, histidine 90, and cysteine 158 each contribute to the Zn(2+) site.

The protein belongs to the GTP cyclohydrolase I family. Homomer.

The enzyme catalyses GTP + H2O = 7,8-dihydroneopterin 3'-triphosphate + formate + H(+). The protein operates within cofactor biosynthesis; 7,8-dihydroneopterin triphosphate biosynthesis; 7,8-dihydroneopterin triphosphate from GTP: step 1/1. This is GTP cyclohydrolase 1 from Janthinobacterium sp. (strain Marseille) (Minibacterium massiliensis).